Reading from the N-terminus, the 339-residue chain is ATPase GET3 (339 aa).

34 to 41 serves as a coordination point for ATP; the sequence is KGGVGKTT. Asp-63 is a catalytic residue. Residues Glu-244 and Asn-271 each contribute to the ATP site. The Zn(2+) site is built by Cys-282 and Cys-285.

This sequence belongs to the arsA ATPase family. As to quaternary structure, homodimer.

The protein localises to the cytoplasm. It is found in the endoplasmic reticulum. In terms of biological role, ATPase required for the post-translational delivery of tail-anchored (TA) proteins to the endoplasmic reticulum. Recognizes and selectively binds the transmembrane domain of TA proteins in the cytosol. This complex then targets to the endoplasmic reticulum by membrane-bound receptors, where the tail-anchored protein is released for insertion. This process is regulated by ATP binding and hydrolysis. ATP binding drives the homodimer towards the closed dimer state, facilitating recognition of newly synthesized TA membrane proteins. ATP hydrolysis is required for insertion. Subsequently, the homodimer reverts towards the open dimer state, lowering its affinity for the membrane-bound receptor, and returning it to the cytosol to initiate a new round of targeting. This chain is ATPase GET3, found in Podospora anserina (strain S / ATCC MYA-4624 / DSM 980 / FGSC 10383) (Pleurage anserina).